A 172-amino-acid polypeptide reads, in one-letter code: L-amino acid oxidase (172 aa).

Residue 44–47 (GPMR) participates in FAD binding. Arg47 and His103 together coordinate substrate.

This sequence belongs to the flavin monoamine oxidase family. FIG1 subfamily. Heterodimer; non-covalently linked. It depends on FAD as a cofactor. N-glycosylated. Expressed by the venom gland.

The protein resides in the secreted. The enzyme catalyses an L-alpha-amino acid + O2 + H2O = a 2-oxocarboxylate + H2O2 + NH4(+). It catalyses the reaction L-leucine + O2 + H2O = 4-methyl-2-oxopentanoate + H2O2 + NH4(+). The catalysed reaction is L-phenylalanine + O2 + H2O = 3-phenylpyruvate + H2O2 + NH4(+). It carries out the reaction L-tryptophan + O2 + H2O = indole-3-pyruvate + H2O2 + NH4(+). The enzyme catalyses L-methionine + O2 + H2O = 4-methylsulfanyl-2-oxobutanoate + H2O2 + NH4(+). It catalyses the reaction L-isoleucine + O2 + H2O = (S)-3-methyl-2-oxopentanoate + H2O2 + NH4(+). The catalysed reaction is L-arginine + O2 + H2O = 5-guanidino-2-oxopentanoate + H2O2 + NH4(+). It carries out the reaction L-tyrosine + O2 + H2O = 3-(4-hydroxyphenyl)pyruvate + H2O2 + NH4(+). With respect to regulation, activity is increased by Mn(2+) ions. Inhibited by Zn(2+), Ni(2+), Co(2+), Cu(2+) and Al(3+). No significant activity change by Na(+), K(+), Ca(2+), Mg(2+) and Ba(2+) ions. Both isoform are completely inhibited by L-Cys and reduced glutathione. O-phenanthroline, beta-mercaptoethanol and PMSF completely inhibit the enzymatic activity of LAAOII, but have no activity on LAAOI. Iodoacetic acid inhibits the enzymatic activity of LAAOII by 46% but has no effect on the LAAOI activity. In terms of biological role, catalyzes an oxidative deamination of predominantly hydrophobic and aromatic L-amino acids, thus producing hydrogen peroxide that may contribute to the diverse toxic effects of this enzyme. Shows high specificity for L-Arg, L-Met, L-Phe, L-Leu, L-Tyr, L-Ile and L-Trp, low specificity for L-Val, L-Ala, L-Asn, L-Gln, and no specificity for L-Pro, L-Ser, L-Thr, L-Cys, L-Gly and L-Asp. Exhibits diverse biological activities, such as hemorrhage, hemolysis, edema, antibacterial and antiparasitic activities, as well as regulation of platelet aggregation. Its effect on platelets is controversial, since it either induces aggregation or inhibits agonist-induced aggregation. These different effects are probably due to different experimental conditions. This is L-amino acid oxidase from Cerastes cerastes (Horned desert viper).